Reading from the N-terminus, the 34-residue chain is Photosystem II reaction center protein M (34 aa).

The chain crosses the membrane as a helical span at residues 5-25; the sequence is ILAFIATVLFILVPTAFLLII.

The protein belongs to the PsbM family. In terms of assembly, PSII is composed of 1 copy each of membrane proteins PsbA, PsbB, PsbC, PsbD, PsbE, PsbF, PsbH, PsbI, PsbJ, PsbK, PsbL, PsbM, PsbT, PsbX, PsbY, PsbZ, Psb30/Ycf12, at least 3 peripheral proteins of the oxygen-evolving complex and a large number of cofactors. It forms dimeric complexes.

The protein resides in the plastid. It localises to the chloroplast thylakoid membrane. Its function is as follows. One of the components of the core complex of photosystem II (PSII). PSII is a light-driven water:plastoquinone oxidoreductase that uses light energy to abstract electrons from H(2)O, generating O(2) and a proton gradient subsequently used for ATP formation. It consists of a core antenna complex that captures photons, and an electron transfer chain that converts photonic excitation into a charge separation. This subunit is found at the monomer-monomer interface. This Piper cenocladum (Ant piper) protein is Photosystem II reaction center protein M.